We begin with the raw amino-acid sequence, 375 residues long: POU domain, class 3, transcription factor 1-B (375 aa).

Disordered stretches follow at residues 1-29, 56-139, and 151-200; these read MAAT…RMHQ, MSLT…QPLI, and MLGP…PSSD. Polar residues-rich tracts occupy residues 107 to 117, 129 to 139, and 151 to 160; these read VHQQTPSSHAW, SPGSNSHQPLI, and MLGPQASSLH. Residues 162-178 are compositionally biased toward basic and acidic residues; sequence SMRDPLHDDPGVHDTHV. The 75-residue stretch at 194–268 folds into the POU-specific domain; the sequence is EDAPSSDDLE…LLNKWLEETD (75 aa). The segment at residues 286–345 is a DNA-binding region (homeobox); the sequence is KRKKRTSIEVGVKGALENHFLKCPKPSAHEITSLADSLQLEKEVVRVWFCNRRQKEKRMT.

The protein belongs to the POU transcription factor family. Class-3 subfamily.

Its subcellular location is the nucleus. Functionally, acts as a transcription factor. May play a role in neuronal differentiation. This is POU domain, class 3, transcription factor 1-B (pou3f1-b) from Xenopus laevis (African clawed frog).